Consider the following 445-residue polypeptide: tRNA modification GTPase MnmE (445 aa).

(6S)-5-formyl-5,6,7,8-tetrahydrofolate-binding residues include Arg20, Glu79, and Lys119. The TrmE-type G domain maps to 215–371 (GLKLAIIGPP…ILKNIENIAE (157 aa)). Asn225 lines the K(+) pocket. GTP contacts are provided by residues 225-230 (NVGKSS), 244-250 (SNIAGTT), and 269-272 (DTAG). Residue Ser229 coordinates Mg(2+). Residues Ser244, Ile246, and Thr249 each coordinate K(+). A Mg(2+)-binding site is contributed by Thr250. Lys445 is a (6S)-5-formyl-5,6,7,8-tetrahydrofolate binding site.

Belongs to the TRAFAC class TrmE-Era-EngA-EngB-Septin-like GTPase superfamily. TrmE GTPase family. In terms of assembly, homodimer. Heterotetramer of two MnmE and two MnmG subunits. The cofactor is K(+).

It localises to the cytoplasm. In terms of biological role, exhibits a very high intrinsic GTPase hydrolysis rate. Involved in the addition of a carboxymethylaminomethyl (cmnm) group at the wobble position (U34) of certain tRNAs, forming tRNA-cmnm(5)s(2)U34. This is tRNA modification GTPase MnmE from Rickettsia conorii (strain ATCC VR-613 / Malish 7).